The sequence spans 286 residues: ATP phosphoribosyltransferase (286 aa).

The protein belongs to the ATP phosphoribosyltransferase family. Long subfamily. Mg(2+) is required as a cofactor.

It localises to the cytoplasm. The catalysed reaction is 1-(5-phospho-beta-D-ribosyl)-ATP + diphosphate = 5-phospho-alpha-D-ribose 1-diphosphate + ATP. Its pathway is amino-acid biosynthesis; L-histidine biosynthesis; L-histidine from 5-phospho-alpha-D-ribose 1-diphosphate: step 1/9. With respect to regulation, feedback inhibited by histidine. Functionally, catalyzes the condensation of ATP and 5-phosphoribose 1-diphosphate to form N'-(5'-phosphoribosyl)-ATP (PR-ATP). Has a crucial role in the pathway because the rate of histidine biosynthesis seems to be controlled primarily by regulation of HisG enzymatic activity. The sequence is that of ATP phosphoribosyltransferase from Paenarthrobacter aurescens (strain TC1).